Here is a 913-residue protein sequence, read N- to C-terminus: MSLSHLLRRLCTTTTTTRSPLSISFLHQRIHNISLSPANEDPETTTGNNQDSEKYPNLNPIPNDPSQFQIPQNHTPPIPYPPIPHRTMAFSSAEEAAAERRRRKRRLRIEPPLHALRRDPSAPPPKRDPNAPRLPDSTSALVGQRLNLHNRVQSLIRASDLDAASKLARQSVFSNTRPTVFTCNAIIAAMYRAKRYSESISLFQYFFKQSNIVPNVVSYNQIINAHCDEGNVDEALEVYRHILANAPFAPSSVTYRHLTKGLVQAGRIGDAASLLREMLSKGQAADSTVYNNLIRGYLDLGDFDKAVEFFDELKSKCTVYDGIVNATFMEYWFEKGNDKEAMESYRSLLDKKFRMHPPTGNVLLEVFLKFGKKDEAWALFNEMLDNHAPPNILSVNSDTVGIMVNECFKMGEFSEAINTFKKVGSKVTSKPFVMDYLGYCNIVTRFCEQGMLTEAERFFAEGVSRSLPADAPSHRAMIDAYLKAERIDDAVKMLDRMVDVNLRVVADFGARVFGELIKNGKLTESAEVLTKMGEREPKPDPSIYDVVVRGLCDGDALDQAKDIVGEMIRHNVGVTTVLREFIIEVFEKAGRREEIEKILNSVARPVRNAGQSGNTPPRVPAVFGTTPAAPQQPRDRAPWTSQGVVHSNSGWANGTAGQTAGGAYKANNGQNPSWSNTSDNQQQQSWSNQTAGQQPPSWSRQAPGYQQQQSWSQQSGWSSPSGHQQSWTNQTAGQQQPWANQTPGQQQQWANQTPGQQQQLANQTPGQQQQWANQTPGQQQQWANQNNGHQQPWANQNTGHQQSWANQTPSQQQPWANQTTGQQQGWGNQTTGQQQQWANQTAGQQSGWTAQQQWSNQTASHQQSQWLNPVPGEVANQTPWSNSVDSHLPQQQEPGPSHECQETQEKKVVELRN.

The disordered stretch occupies residues 34 to 138 (SLSPANEDPE…PNAPRLPDST (105 aa)). Polar residues predominate over residues 64–73 (DPSQFQIPQN). The span at 74 to 84 (HTPPIPYPPIP) shows a compositional bias: pro residues. The short motif at 99–108 (ERRRRKRRLR) is the Nuclear localization signal element. The segment covering 108–130 (RIEPPLHALRRDPSAPPPKRDPN) has biased composition (basic and acidic residues). Residues 134-167 (LPDSTSALVGQRLNLHNRVQSLIRASDLDAASKL) form a leucine-zipper region. 11 PPR repeats span residues 179–214 (TVFT…NIVP), 215–250 (NVVS…PFAP), 251–285 (SSVT…GQAA), 286–316 (DSTV…LKSK), 321–355 (DGIV…KFRM), 356–390 (HPPT…HAPP), 396–426 (NSDT…VGSK), 435–469 (DYLG…SLPA), 470–504 (DAPS…NLRV), 505–539 (VADF…EPKP), and 540–574 (DPSI…NVGV). Residues 607-913 (RNAGQSGNTP…QEKKVVELRN (307 aa)) form a disordered region. Positions 639–649 (WTSQGVVHSNS) are enriched in polar residues. Low complexity-rich tracts occupy residues 650 to 666 (GWAN…AYKA) and 673 to 690 (SWSN…SNQT). Positions 674 to 858 (WSNTSDNQQQ…TAQQQWSNQT (185 aa)) are 14 X 11 AA approximate tandem repeats of W-x(2)-Q-x(4)-Q-x(2). Residues 691-700 (AGQQPPSWSR) are compositionally biased toward polar residues. Residues 706–727 (QQQQSWSQQSGWSSPSGHQQSW) show a composition bias toward low complexity. Residues 728-761 (TNQTAGQQQPWANQTPGQQQQWANQTPGQQQQLA) are compositionally biased toward polar residues. Residues 762 to 791 (NQTPGQQQQWANQTPGQQQQWANQNNGHQQ) show a composition bias toward low complexity. Polar residues predominate over residues 792 to 814 (PWANQNTGHQQSWANQTPSQQQP). A compositionally biased stretch (low complexity) spans 815-845 (WANQTTGQQQGWGNQTTGQQQQWANQTAGQQ). Polar residues-rich tracts occupy residues 846-867 (SGWT…SQWL) and 875-894 (ANQT…QQEP). Basic and acidic residues predominate over residues 899–913 (ECQETQEKKVVELRN).

It belongs to the PPR family. P subfamily. In terms of assembly, interacts with RPB36B through its WQQ domain. In terms of tissue distribution, ubiquitous but preferentially expressed in gametophytes and young embryos.

The protein localises to the nucleus. Functionally, may function as a transcriptional regulator essential for early embryogenesis. In Arabidopsis thaliana (Mouse-ear cress), this protein is Pentatricopeptide repeat-containing protein At1g10270 (GRP23).